Here is a 335-residue protein sequence, read N- to C-terminus: Transmembrane protein 120B-B (335 aa).

The stretch at Met1–Asn39 forms a coiled coil. 6 helical membrane passes run Ser100–Ser116, Phe130–His150, Val157–Ile177, Val193–Phe213, Phe268–Phe288, and Gln300–Leu320.

It belongs to the TMEM120 family.

Its subcellular location is the nucleus inner membrane. Functionally, necessary for efficient adipogenesis. Does not show ion channel activity. This chain is Transmembrane protein 120B-B (tmem120b-b), found in Xenopus laevis (African clawed frog).